The chain runs to 770 residues: Probable methyltransferase PMT24 (770 aa).

At Met-1–Tyr-17 the chain is on the cytoplasmic side. The chain crosses the membrane as a helical; Signal-anchor for type II membrane protein span at residues Gly-18–Met-38. Residues Ser-39–Ala-770 are Lumenal-facing. Basic and acidic residues-rich tracts occupy residues Glu-54–Glu-81 and Asn-93–Asp-164. Positions Glu-54 to Gln-223 are disordered. N-linked (GlcNAc...) asparagine glycans are attached at residues Asn-160 and Asn-166. Residues Glu-212 to Gln-223 are compositionally biased toward polar residues. 2 N-linked (GlcNAc...) asparagine glycosylation sites follow: Asn-244 and Asn-363.

It belongs to the methyltransferase superfamily.

It localises to the golgi apparatus membrane. This Arabidopsis thaliana (Mouse-ear cress) protein is Probable methyltransferase PMT24.